The chain runs to 426 residues: D-ribulose kinase (426 aa).

Substrate contacts are provided by residues aspartate 8, 12–15 (SGAR), serine 72, and aspartate 221. ATP contacts are provided by residues serine 243, glycine 281, and 376 to 380 (GGAKN).

This sequence belongs to the FGGY kinase family. A divalent metal cation is required as a cofactor.

The enzyme catalyses D-ribulose + ATP = D-ribulose 5-phosphate + ADP + H(+). Functionally, exhibits ATP hydrolysis without substrate. Phosphorylates D-ribulose. The polypeptide is D-ribulose kinase (Synechococcus elongatus (strain ATCC 33912 / PCC 7942 / FACHB-805) (Anacystis nidulans R2)).